The following is a 508-amino-acid chain: Light-independent protochlorophyllide reductase subunit B (508 aa).

Residue aspartate 36 participates in [4Fe-4S] cluster binding. Aspartate 294 functions as the Proton donor in the catalytic mechanism. Residue glycine 429–methionine 430 coordinates substrate.

This sequence belongs to the ChlB/BchB/BchZ family. In terms of assembly, protochlorophyllide reductase is composed of three subunits; ChlL, ChlN and ChlB. Forms a heterotetramer of two ChlB and two ChlN subunits. It depends on [4Fe-4S] cluster as a cofactor.

It catalyses the reaction chlorophyllide a + oxidized 2[4Fe-4S]-[ferredoxin] + 2 ADP + 2 phosphate = protochlorophyllide a + reduced 2[4Fe-4S]-[ferredoxin] + 2 ATP + 2 H2O. It participates in porphyrin-containing compound metabolism; chlorophyll biosynthesis (light-independent). Component of the dark-operative protochlorophyllide reductase (DPOR) that uses Mg-ATP and reduced ferredoxin to reduce ring D of protochlorophyllide (Pchlide) to form chlorophyllide a (Chlide). This reaction is light-independent. The NB-protein (ChlN-ChlB) is the catalytic component of the complex. This is Light-independent protochlorophyllide reductase subunit B from Crocosphaera subtropica (strain ATCC 51142 / BH68) (Cyanothece sp. (strain ATCC 51142)).